The primary structure comprises 225 residues: MNSPIEKLTRQLGYQFQDDELLNLALTHRSANSKHNERLEFLGDSILSFVIADELYHRFPKVNEGDMSRMRATLVRGNTLAELGREFGLGDYLKLGPGELKSGGFRRDSILADAVEAIIGAVYLDSDLEVVRGIVLNWYASRLEAIKPGVSQKDPKTRLQEFLQGRRKPLPVYTVTNIKGEAHNQEFTVECDIAGMDKPVVGRGTSRRKAEQAAAELALEQLTNG.

Residues 5-127 form the RNase III domain; the sequence is IEKLTRQLGY…IIGAVYLDSD (123 aa). Mg(2+) is bound at residue Glu40. Residue Asp44 is part of the active site. Positions 113 and 116 each coordinate Mg(2+). The active site involves Glu116. Residues 154-224 form the DRBM domain; the sequence is DPKTRLQEFL…AELALEQLTN (71 aa).

This sequence belongs to the ribonuclease III family. In terms of assembly, homodimer. Mg(2+) is required as a cofactor.

The protein localises to the cytoplasm. The catalysed reaction is Endonucleolytic cleavage to 5'-phosphomonoester.. Digests double-stranded RNA. Involved in the processing of primary rRNA transcript to yield the immediate precursors to the large and small rRNAs (23S and 16S). Processes some mRNAs, and tRNAs when they are encoded in the rRNA operon. Processes pre-crRNA and tracrRNA of type II CRISPR loci if present in the organism. The protein is Ribonuclease 3 of Vibrio vulnificus (strain YJ016).